The following is a 496-amino-acid chain: Probable CtpA-like serine protease (496 aa).

The span at 1–16 (MDDKQHTSSSDDERAE) shows a compositional bias: basic and acidic residues. A disordered region spans residues 1–27 (MDDKQHTSSSDDERAEIATSNQDQETN). Positions 18–27 (ATSNQDQETN) are enriched in polar residues. A helical membrane pass occupies residues 39-59 (FISILIGTILITAVITVVAYI). Residues 124–206 (TKSFNEGVSG…TEVTLTVQRG (83 aa)) enclose the PDZ domain. Residues S329, D340, and K354 each act as charge relay system in the active site.

It belongs to the peptidase S41A family.

It is found in the cell membrane. This chain is Probable CtpA-like serine protease, found in Staphylococcus aureus (strain COL).